A 508-amino-acid chain; its full sequence is Cytochrome P450 monooxygenase dmxR5 (508 aa).

Residues 24 to 44 (LTLGLGAILVVLMSFLAFLSY) traverse the membrane as a helical segment. 2 N-linked (GlcNAc...) asparagine glycosylation sites follow: Asn387 and Asn405. Cys451 is a heme binding site. Asn462 carries N-linked (GlcNAc...) asparagine glycosylation. Residues 481 to 508 (EHKKSTQESGHGVPLPSKLSKFSPREEN) form a disordered region.

The protein belongs to the cytochrome P450 family. Heme serves as cofactor.

It is found in the membrane. It participates in secondary metabolite biosynthesis. Its function is as follows. Cytochrome P450 monooxygenase; part of the gene cluster that mediates the biosynthesis of the dimeric xanthones cryptosporioptides. The pathway begins with the synthesis of atrochrysone thioester by the polyketide synthase dmx-nrPKS. The atrochrysone carboxyl ACP thioesterase dmxR1 then breaks the thioester bond and releases the atrochrysone carboxylic acid from dmx-nrPKS. Atrochrysone carboxylic acid is decarboxylated by the decarboxylase dmxR15, and oxidized by the anthrone oxygenase dmxR16 to yield emodin. Emodin is then reduced to emodin hydroquinone by the oxidoreductase dmxR7. A-ring reduction by the short chain dehydrogenase dmxR18, dehydration by the scytalone dehydratase-like protein dmxR17 and probable spontaneous re-oxidation, results in overall deoxygenation to chrysophanol. Baeyer-Villiger oxidation by the Baeyer-Villiger monooxygenase (BVMO) dmxR6 then yields monodictylactone in equilibrium with monodictyphenone. In the case of the cryptosporioptides biosynthesis, monodictylactone is reduced at C-12 to an alcohol (by the short chain dehydrogenases dmxR12 or dmxR8) and hydroxylated at C-5 by dmxR9, yielding the electron-rich aromatic which could eliminate H(2)O to form the ortho-quinonemethide, followed by tautomerisation to paraquinone and complete the formal reduction to produce the 10-methylgroup. Conjugate addition of C-4a-OH to the resulting paraquinone by the monooxygenase dmxR10 then gives cyclohexadienone, which is then reduced at C-5 by the short chain dehydrogenase dmxR3 to give the dihydroxanthone. The 6,7-epoxide in the cryptosporioptides could be introduced by the cytochrome P450 monooxygenase dmxL3. The highly reducing PKS dmxL2 manufactures butyrate, which is further carboxylated by dmxL1 to form ethylmalonate. It is not yet clear whether the carboxylation occurs while the butyrate is attached to the ACP of dmxL2, but this unusual fungal metabolite could then be esterified to O-5 by the O-acetyltransferase dmxR13. Finally, dimerization performed by dmxR5 gives the observed dimers cryptosporioptides A, B and C as the final products of the pathway. The sequence is that of Cytochrome P450 monooxygenase dmxR5 from Cryptosporiopsis sp. (strain 8999).